The chain runs to 616 residues: Chaperone protein HscA (616 aa).

The protein belongs to the heat shock protein 70 family.

Chaperone involved in the maturation of iron-sulfur cluster-containing proteins. Has a low intrinsic ATPase activity which is markedly stimulated by HscB. Involved in the maturation of IscU. This is Chaperone protein HscA from Escherichia coli O139:H28 (strain E24377A / ETEC).